Consider the following 541-residue polypeptide: Protein wntless homolog (541 aa).

Over 1–15 the chain is Cytoplasmic; sequence MAGAIIENMGTKKLC. A helical membrane pass occupies residues 16 to 36; it reads IVGGILLVFQIIAFLVGGLIA. Topologically, residues 37–232 are lumenal; the sequence is PGPTTAVSYM…GIHQNGGFTK (196 aa). The interaction with Wnt proteins stretch occupies residues 101–232; the sequence is MEMSPWFQFM…GIHQNGGFTK (132 aa). A helical transmembrane segment spans residues 233-253; the sequence is VWFAMKTFLTPSIFIIMVWYW. The Cytoplasmic segment spans residues 254–268; it reads RRITMMSRPPVLLEK. A helical membrane pass occupies residues 269-289; that stretch reads VIFALGISMTFINIPVEWFSI. Over 290–303 the chain is Lumenal; it reads GFDWTWMLLFGDIR. A helical transmembrane segment spans residues 304 to 324; the sequence is QGIFYAMLLSFWIIFCGEHMM. Residues 325–331 are Cytoplasmic-facing; that stretch reads DQHERNH. Residues 332–352 form a helical membrane-spanning segment; sequence IAGYWKQVGPIAVGSFCLFIF. Topologically, residues 353–380 are lumenal; the sequence is DMCERGVQLTNPFYSIWTTDIGTELAMA. A helical membrane pass occupies residues 381-401; it reads FIIVAGICLCLYFLFLCFMVF. The Cytoplasmic portion of the chain corresponds to 402–431; sequence QVFRNISGKQSSLPAMSKVRRLHYEGLIFR. Residues 432–452 form a helical membrane-spanning segment; the sequence is FKFLMLITLACAAMTVIFFIV. At 453 to 471 the chain is on the lumenal side; sequence SQVTEGHWKWGGVTVQVNS. A helical transmembrane segment spans residues 472–492; that stretch reads AFFTGIYGMWNLYVFALMFLY. The Cytoplasmic segment spans residues 493–541; sequence APSHKNYGEDQSNGDLGVHSGEELQLTTTITHVDGPTEIYKLTRKEAQE.

This sequence belongs to the wntless family. In terms of assembly, interacts with WNT3A. Interacts with WNT1, WNT3 and WNT5A.

The protein resides in the golgi apparatus membrane. Its subcellular location is the cytoplasmic vesicle membrane. The protein localises to the cell membrane. It localises to the endoplasmic reticulum membrane. It is found in the early endosome membrane. Functionally, regulates Wnt proteins sorting and secretion in a feedback regulatory mechanism. This reciprocal interaction plays a key role in the regulation of expression, subcellular location, binding and organelle-specific association of Wnt proteins. Also plays an important role in establishment of the anterior-posterior body axis formation during development. The sequence is that of Protein wntless homolog (WLS) from Pongo abelii (Sumatran orangutan).